Here is a 428-residue protein sequence, read N- to C-terminus: Aminotransferase verI (428 aa).

Lysine 254 is subject to N6-(pyridoxal phosphate)lysine.

Belongs to the class-I pyridoxal-phosphate-dependent aminotransferase family. Pyridoxal 5'-phosphate serves as cofactor.

Its pathway is mycotoxin biosynthesis. Aminotransferase; part of the gene cluster that mediates the biosynthesis of 11'-deoxyverticillin A, one of the dimeric epipolythiodioxopiperazines (ETPs) from the verticillin family that act as mycotoxins. 11'-deoxyverticillin A is required for normal conidiation. The nonribosomal peptide synthetase verP is speculated to be responsible for condensation of amino acids to form the carbon skeleton of verticillin, whereas the cluster-specific tailoring enzymes are involved in further modifications leading to the production of 11'-deoxyverticillin A. This Clonostachys rogersoniana protein is Aminotransferase verI.